A 329-amino-acid polypeptide reads, in one-letter code: Aspartate carbamoyltransferase catalytic subunit (329 aa).

R66 and T67 together coordinate carbamoyl phosphate. An L-aspartate-binding site is contributed by K94. R116, H149, and Q152 together coordinate carbamoyl phosphate. L-aspartate is bound by residues R189 and R243. Residues G284 and P285 each coordinate carbamoyl phosphate.

This sequence belongs to the aspartate/ornithine carbamoyltransferase superfamily. ATCase family. In terms of assembly, heterododecamer (2C3:3R2) of six catalytic PyrB chains organized as two trimers (C3), and six regulatory PyrI chains organized as three dimers (R2).

The catalysed reaction is carbamoyl phosphate + L-aspartate = N-carbamoyl-L-aspartate + phosphate + H(+). Its pathway is pyrimidine metabolism; UMP biosynthesis via de novo pathway; (S)-dihydroorotate from bicarbonate: step 2/3. Catalyzes the condensation of carbamoyl phosphate and aspartate to form carbamoyl aspartate and inorganic phosphate, the committed step in the de novo pyrimidine nucleotide biosynthesis pathway. This Gloeobacter violaceus (strain ATCC 29082 / PCC 7421) protein is Aspartate carbamoyltransferase catalytic subunit.